The following is a 305-amino-acid chain: Homoserine O-acetyltransferase (305 aa).

C132 functions as the Acyl-thioester intermediate in the catalytic mechanism. K153 and S181 together coordinate substrate. Catalysis depends on H221, which acts as the Proton acceptor. E223 is a catalytic residue. Residue R235 participates in substrate binding.

This sequence belongs to the MetA family.

Its subcellular location is the cytoplasm. The catalysed reaction is L-homoserine + acetyl-CoA = O-acetyl-L-homoserine + CoA. Its pathway is amino-acid biosynthesis; L-methionine biosynthesis via de novo pathway; O-acetyl-L-homoserine from L-homoserine: step 1/1. Its function is as follows. Transfers an acetyl group from acetyl-CoA to L-homoserine, forming acetyl-L-homoserine. The sequence is that of Homoserine O-acetyltransferase from Leuconostoc mesenteroides subsp. mesenteroides (strain ATCC 8293 / DSM 20343 / BCRC 11652 / CCM 1803 / JCM 6124 / NCDO 523 / NBRC 100496 / NCIMB 8023 / NCTC 12954 / NRRL B-1118 / 37Y).